The primary structure comprises 319 residues: Acetyl-coenzyme A carboxylase carboxyl transferase subunit alpha (319 aa).

The CoA carboxyltransferase C-terminal domain maps to 35–296 (DLDKEIEQLE…KATLVANLAE (262 aa)).

It belongs to the AccA family. In terms of assembly, acetyl-CoA carboxylase is a heterohexamer composed of biotin carboxyl carrier protein (AccB), biotin carboxylase (AccC) and two subunits each of ACCase subunit alpha (AccA) and ACCase subunit beta (AccD).

It localises to the cytoplasm. The catalysed reaction is N(6)-carboxybiotinyl-L-lysyl-[protein] + acetyl-CoA = N(6)-biotinyl-L-lysyl-[protein] + malonyl-CoA. It functions in the pathway lipid metabolism; malonyl-CoA biosynthesis; malonyl-CoA from acetyl-CoA: step 1/1. In terms of biological role, component of the acetyl coenzyme A carboxylase (ACC) complex. First, biotin carboxylase catalyzes the carboxylation of biotin on its carrier protein (BCCP) and then the CO(2) group is transferred by the carboxyltransferase to acetyl-CoA to form malonyl-CoA. The chain is Acetyl-coenzyme A carboxylase carboxyl transferase subunit alpha from Photobacterium profundum (strain SS9).